Reading from the N-terminus, the 356-residue chain is Protein RecA (356 aa).

69 to 76 provides a ligand contact to ATP; it reads GPESSGKT.

The protein belongs to the RecA family.

The protein resides in the cytoplasm. Functionally, can catalyze the hydrolysis of ATP in the presence of single-stranded DNA, the ATP-dependent uptake of single-stranded DNA by duplex DNA, and the ATP-dependent hybridization of homologous single-stranded DNAs. It interacts with LexA causing its activation and leading to its autocatalytic cleavage. The polypeptide is Protein RecA (Gloeothece citriformis (strain PCC 7424) (Cyanothece sp. (strain PCC 7424))).